A 61-amino-acid chain; its full sequence is Small ribosomal subunit protein uS14 (61 aa).

Positions 24, 27, 40, and 43 each coordinate Zn(2+).

This sequence belongs to the universal ribosomal protein uS14 family. Zinc-binding uS14 subfamily. Part of the 30S ribosomal subunit. Contacts proteins S3 and S10. The cofactor is Zn(2+).

Functionally, binds 16S rRNA, required for the assembly of 30S particles and may also be responsible for determining the conformation of the 16S rRNA at the A site. In Campylobacter curvus (strain 525.92), this protein is Small ribosomal subunit protein uS14.